We begin with the raw amino-acid sequence, 340 residues long: Fructose-1,6-bisphosphatase, cytosolic (340 aa).

Residues E71, E100, D121, L123, and D124 each contribute to the Mg(2+) site. Residues 124-127 (DGSS), N215, Y247, Y267, and K277 contribute to the substrate site. E283 provides a ligand contact to Mg(2+).

Belongs to the FBPase class 1 family. Requires Mg(2+) as cofactor.

Its subcellular location is the cytoplasm. It catalyses the reaction beta-D-fructose 1,6-bisphosphate + H2O = beta-D-fructose 6-phosphate + phosphate. The sequence is that of Fructose-1,6-bisphosphatase, cytosolic from Solanum tuberosum (Potato).